The primary structure comprises 208 residues: MKHIHKIKNYAMVGGLGVMAVFALNACEQNSGQNNALNNTLQNSQKNGAFVIVEEQNDGSYKVLEEYPSEQTRVMLKDKNGQERLLSQEEIDELIKQEEVAIDSGQSQLTNPNGGGLGLGGAILASAAGAILGSYIGNKLFNNPNYQANSQRNYKSPQAYERSKNSFNSAKTGASGASKTSSGKSGFFGGGNSSQSTSTNRNTGSMGS.

Residues 1–26 (MKHIHKIKNYAMVGGLGVMAVFALNA) form the signal peptide. Cys-27 is lipidated: N-palmitoyl cysteine. The S-diacylglycerol cysteine moiety is linked to residue Cys-27. Residues 148–208 (ANSQRNYKSP…TNRNTGSMGS (61 aa)) are disordered. 2 stretches are compositionally biased toward low complexity: residues 169–185 (SAKTGASGASKTSSGKS) and 193–208 (SSQSTSTNRNTGSMGS).

Belongs to the UPF0323 family.

It localises to the cell membrane. The sequence is that of UPF0323 lipoprotein HH_0014 from Helicobacter hepaticus (strain ATCC 51449 / 3B1).